Reading from the N-terminus, the 179-residue chain is Peptidyl-tRNA hydrolase (179 aa).

Residue Tyr-15 coordinates tRNA. His-20 (proton acceptor) is an active-site residue. 3 residues coordinate tRNA: Tyr-66, Asn-68, and Asn-114.

The protein belongs to the PTH family. In terms of assembly, monomer.

It localises to the cytoplasm. The enzyme catalyses an N-acyl-L-alpha-aminoacyl-tRNA + H2O = an N-acyl-L-amino acid + a tRNA + H(+). Functionally, hydrolyzes ribosome-free peptidyl-tRNAs (with 1 or more amino acids incorporated), which drop off the ribosome during protein synthesis, or as a result of ribosome stalling. Its function is as follows. Catalyzes the release of premature peptidyl moieties from peptidyl-tRNA molecules trapped in stalled 50S ribosomal subunits, and thus maintains levels of free tRNAs and 50S ribosomes. The sequence is that of Peptidyl-tRNA hydrolase from Chlamydia trachomatis serovar L2 (strain ATCC VR-902B / DSM 19102 / 434/Bu).